The chain runs to 1680 residues: Alpha-protein kinase 3 (1680 aa).

Residues 1–37 (MGSRRAAGRGWGLGGRAGAGGDSEDDGPVWTPGPASR) form a disordered region. Over residues 9–21 (RGWGLGGRAGAGG) the composition is skewed to gly residues. Positions 77 to 173 (PLFETTLKSR…SGVLEVGTMT (97 aa)) constitute an Ig-like 1 domain. Ser-229 carries the post-translational modification Phosphoserine. 5 disordered regions span residues 237-288 (STPV…NGED), 302-759 (ELGP…CPRE), 785-950 (SEEA…GTRS), 1078-1128 (EGSA…LTGL), and 1147-1244 (PKVR…QRKA). The segment covering 320 to 337 (KDEESKPGEQKLELEKAE) has biased composition (basic and acidic residues). Residues 339 to 353 (SQCSSENVVPSTDKP) are compositionally biased toward polar residues. The segment covering 402 to 426 (APAPAPVPAPALAPAPVPVPAPTPV) has biased composition (pro residues). Low complexity predominate over residues 514 to 532 (ESTTTSLSSQTSESMAQSL). Composition is skewed to polar residues over residues 557-566 (SPLQGQTSHK) and 731-744 (ETQS…SLSS). The span at 785-796 (SEEAAFRSHEDG) shows a compositional bias: basic and acidic residues. The segment covering 917 to 932 (SPTQSHPPEAMATSSE) has biased composition (polar residues). Composition is skewed to basic and acidic residues over residues 1087–1111 (ERTS…ESRT) and 1151–1165 (AGSD…ERES). Ser-1199 is subject to Phosphoserine. A compositionally biased stretch (basic and acidic residues) spans 1231 to 1244 (DEGKQEALAKQRKA). One can recognise an Ig-like 2 domain in the interval 1251–1339 (PQVIRKIRVE…GSASTDFCLS (89 aa)). Cys-1273 and Cys-1323 form a disulfide bridge. Residues 1367-1600 (KGLADSGCWG…YCDMLGLKPL (234 aa)) enclose the Alpha-type protein kinase domain. A disordered region spans residues 1603–1680 (PEAAHPQAKA…DGSSKAQSMR (78 aa)). Polar residues-rich tracts occupy residues 1639–1660 (PQGS…QAAT) and 1671–1680 (DGSSKAQSMR).

This sequence belongs to the protein kinase superfamily. Alpha-type protein kinase family. ALPK subfamily. As to expression, expressed in the heart and skeletal muscle of adult mice.

The protein localises to the nucleus. It catalyses the reaction L-seryl-[protein] + ATP = O-phospho-L-seryl-[protein] + ADP + H(+). It carries out the reaction L-threonyl-[protein] + ATP = O-phospho-L-threonyl-[protein] + ADP + H(+). Involved in cardiomyocyte differentiation. This is Alpha-protein kinase 3 from Mus musculus (Mouse).